A 635-amino-acid polypeptide reads, in one-letter code: 1-deoxy-D-xylulose-5-phosphate synthase (635 aa).

Thiamine diphosphate contacts are provided by residues H79 and 120-122 (GHS). D151 contributes to the Mg(2+) binding site. Thiamine diphosphate-binding positions include 152-153 (GA), N182, Y291, and E372. N182 lines the Mg(2+) pocket.

It belongs to the transketolase family. DXPS subfamily. In terms of assembly, homodimer. Requires Mg(2+) as cofactor. Thiamine diphosphate is required as a cofactor.

The catalysed reaction is D-glyceraldehyde 3-phosphate + pyruvate + H(+) = 1-deoxy-D-xylulose 5-phosphate + CO2. It functions in the pathway metabolic intermediate biosynthesis; 1-deoxy-D-xylulose 5-phosphate biosynthesis; 1-deoxy-D-xylulose 5-phosphate from D-glyceraldehyde 3-phosphate and pyruvate: step 1/1. Its function is as follows. Catalyzes the acyloin condensation reaction between C atoms 2 and 3 of pyruvate and glyceraldehyde 3-phosphate to yield 1-deoxy-D-xylulose-5-phosphate (DXP). The polypeptide is 1-deoxy-D-xylulose-5-phosphate synthase (Xylella fastidiosa (strain M23)).